We begin with the raw amino-acid sequence, 38 residues long: Large ribosomal subunit protein bL36 (38 aa).

The protein belongs to the bacterial ribosomal protein bL36 family.

This Prochlorococcus marinus (strain SARG / CCMP1375 / SS120) protein is Large ribosomal subunit protein bL36.